The following is a 491-amino-acid chain: Probable glycine dehydrogenase (decarboxylating) subunit 2 (491 aa).

N6-(pyridoxal phosphate)lysine is present on lysine 273.

Belongs to the GcvP family. C-terminal subunit subfamily. As to quaternary structure, the glycine cleavage system is composed of four proteins: P, T, L and H. In this organism, the P 'protein' is a heterodimer of two subunits. The cofactor is pyridoxal 5'-phosphate.

The enzyme catalyses N(6)-[(R)-lipoyl]-L-lysyl-[glycine-cleavage complex H protein] + glycine + H(+) = N(6)-[(R)-S(8)-aminomethyldihydrolipoyl]-L-lysyl-[glycine-cleavage complex H protein] + CO2. In terms of biological role, the glycine cleavage system catalyzes the degradation of glycine. The P protein binds the alpha-amino group of glycine through its pyridoxal phosphate cofactor; CO(2) is released and the remaining methylamine moiety is then transferred to the lipoamide cofactor of the H protein. The sequence is that of Probable glycine dehydrogenase (decarboxylating) subunit 2 from Bacillus cytotoxicus (strain DSM 22905 / CIP 110041 / 391-98 / NVH 391-98).